The chain runs to 125 residues: MADLAKIVDDLSSLTVLEAAELSKLLEEKWGVSAAAPVAVAAAAGGAAAAVVEEEKTEFDVILVEAGANKINVIKEVRAITGLGLKEAKDLVEAAPKAVKEGVNKAEAADIKKKLEDAGAKADVK.

The protein belongs to the bacterial ribosomal protein bL12 family. Homodimer. Part of the ribosomal stalk of the 50S ribosomal subunit. Forms a multimeric L10(L12)X complex, where L10 forms an elongated spine to which 2 to 4 L12 dimers bind in a sequential fashion. Binds GTP-bound translation factors.

Forms part of the ribosomal stalk which helps the ribosome interact with GTP-bound translation factors. Is thus essential for accurate translation. The sequence is that of Large ribosomal subunit protein bL12 from Rhizobium johnstonii (strain DSM 114642 / LMG 32736 / 3841) (Rhizobium leguminosarum bv. viciae).